The following is an 879-amino-acid chain: Prostaglandin F2 receptor negative regulator (879 aa).

Residues 1-21 (MGRPAPRPLLLALLSLAVCRG) form the signal peptide. Ig-like C2-type domains lie at 22-137 (RVVR…DTVQ) and 149-263 (PSSR…QEIQ). The Extracellular segment spans residues 22–832 (RVVRVPAGTL…MDVLNAFKYP (811 aa)). Cystine bridges form between Cys-43/Cys-119 and Cys-169/Cys-247. An N-linked (GlcNAc...) asparagine glycan is attached at Asn-44. The Cell attachment site motif lies at 89-91 (RGD). Residue Thr-271 is modified to Phosphothreonine. 4 Ig-like C2-type domains span residues 276-389 (PTAL…WHKV), 406-536 (PEYQ…DVFS), 544-662 (ASED…AWSP), and 688-813 (PTFN…AEIH). Cys-299 and Cys-373 form a disulfide bridge. Residues Asn-300, Asn-383, and Asn-413 are each glycosylated (N-linked (GlcNAc...) asparagine). The Endoplasmic reticulum retention signal motif lies at 424–427 (PTEL). A disulfide bond links Cys-429 and Cys-515. Residues Asn-525, Asn-600, Asn-618, and Asn-691 are each glycosylated (N-linked (GlcNAc...) asparagine). Cys-571 and Cys-655 form a disulfide bridge. The Cell attachment site motif lies at 703–705 (RGD). Residues Cys-711 and Cys-793 are joined by a disulfide bond. Residues 833–853 (LLIGVGLSTVIGLLSCLIGYC) form a helical membrane-spanning segment. At 854-879 (SSHWCCKKEVRETRRERRRLMSMEMD) the chain is on the cytoplasmic side.

Interacts with CD9 and CD81. Part of a complex composed of CD9, CD81 and IGSF8. Also seems to interact with CD63, CD82 and CD151. Expressed in myoblasts (at protein level).

The protein localises to the endoplasmic reticulum membrane. It localises to the golgi apparatus. It is found in the trans-Golgi network membrane. In terms of biological role, inhibits the binding of prostaglandin F2-alpha (PGF2-alpha) to its specific FP receptor, by decreasing the receptor number rather than the affinity constant. Functional coupling with the prostaglandin F2-alpha receptor seems to occur. In myoblasts, associates with tetraspanins CD9 and CD81 to prevent myotube fusion during muscle regeneration. The protein is Prostaglandin F2 receptor negative regulator (Ptgfrn) of Mus musculus (Mouse).